The chain runs to 309 residues: tRNA pseudouridine synthase B (309 aa).

The active-site Nucleophile is D51.

This sequence belongs to the pseudouridine synthase TruB family. Type 1 subfamily.

The catalysed reaction is uridine(55) in tRNA = pseudouridine(55) in tRNA. Its function is as follows. Responsible for synthesis of pseudouridine from uracil-55 in the psi GC loop of transfer RNAs. This chain is tRNA pseudouridine synthase B, found in Coxiella burnetii (strain RSA 331 / Henzerling II).